Reading from the N-terminus, the 177-residue chain is Gamma-crystallin M1-2 (177 aa).

2 consecutive Beta/gamma crystallin 'Greek key' domains span residues 2 to 40 (GKII…RVEN) and 41 to 83 (GCWM…RLLS). Residues 84–90 (QNLGIGT) form a connecting peptide region. 2 consecutive Beta/gamma crystallin 'Greek key' domains span residues 91-131 (NKLR…NVLD) and 132-174 (GYWI…RRVI).

Belongs to the beta/gamma-crystallin family. As to quaternary structure, monomer.

Its function is as follows. Crystallins are the dominant structural components of the vertebrate eye lens. This Aquarana catesbeiana (American bullfrog) protein is Gamma-crystallin M1-2.